The primary structure comprises 325 residues: ATP phosphoribosyltransferase (325 aa).

Belongs to the ATP phosphoribosyltransferase family. Long subfamily. Requires Mg(2+) as cofactor.

The protein localises to the cytoplasm. The enzyme catalyses 1-(5-phospho-beta-D-ribosyl)-ATP + diphosphate = 5-phospho-alpha-D-ribose 1-diphosphate + ATP. Its pathway is amino-acid biosynthesis; L-histidine biosynthesis; L-histidine from 5-phospho-alpha-D-ribose 1-diphosphate: step 1/9. Feedback inhibited by histidine. Catalyzes the condensation of ATP and 5-phosphoribose 1-diphosphate to form N'-(5'-phosphoribosyl)-ATP (PR-ATP). Has a crucial role in the pathway because the rate of histidine biosynthesis seems to be controlled primarily by regulation of HisG enzymatic activity. The polypeptide is ATP phosphoribosyltransferase (Nitrobacter hamburgensis (strain DSM 10229 / NCIMB 13809 / X14)).